Here is a 352-residue protein sequence, read N- to C-terminus: Heat-inducible transcription repressor HrcA (352 aa).

The protein belongs to the HrcA family.

Negative regulator of class I heat shock genes (grpE-dnaK-dnaJ and groELS operons). Prevents heat-shock induction of these operons. This chain is Heat-inducible transcription repressor HrcA, found in Prochlorococcus marinus (strain MIT 9313).